The sequence spans 242 residues: MTLHRAISPAVAVRRLSRAFGDRPVLHDITLNIPSGQFVALLGESGSGKTTLLRALAGLDDDARQSGSYSVPKNVSVLFQDARLLPWLSVIDNLTLGLRRQDAVQAAQSMLDSVGIGDKARAYPATLSGGQKQRAALARSLLRNPDLLLADEPFGALDALTRLKMHDLLLRLVERSRPTIVLVTHDVDEAVLLADRILVLRDGVIAEDHRVTVPHPRRPSHPDFEDLRRRLLRSLGVETEHI.

Residues 11–227 form the ABC transporter domain; that stretch reads VAVRRLSRAF…RPSHPDFEDL (217 aa). 43–50 contacts ATP; that stretch reads GESGSGKT.

The protein belongs to the ABC transporter superfamily. Aliphatic sulfonates importer (TC 3.A.1.17.2) family. The complex is composed of two ATP-binding proteins (SsuB), two transmembrane proteins (SsuC) and a solute-binding protein (SsuA).

It is found in the cell inner membrane. It carries out the reaction ATP + H2O + aliphatic sulfonate-[sulfonate-binding protein]Side 1 = ADP + phosphate + aliphatic sulfonateSide 2 + [sulfonate-binding protein]Side 1.. Functionally, part of the ABC transporter complex SsuABC involved in aliphatic sulfonates import. Responsible for energy coupling to the transport system. The chain is Aliphatic sulfonates import ATP-binding protein SsuB 1 from Paracoccus denitrificans (strain Pd 1222).